We begin with the raw amino-acid sequence, 198 residues long: Large ribosomal subunit protein uL24c (198 aa).

The N-terminal 50 residues, 1–50 (MATMSALQSSFTSLSLSPSSSFLGQRLISPISLSVTSPVKPAENPCLVLA), are a transit peptide targeting the chloroplast.

The protein belongs to the universal ribosomal protein uL24 family. In terms of assembly, part of the 50S ribosomal subunit.

The protein resides in the plastid. The protein localises to the chloroplast. One of two assembly initiator proteins, it binds directly to the 5'-end of the 23S rRNA, where it nucleates assembly of the 50S subunit. Required for optimal plastid performance in terms of photosynthesis and growth. Required for the translation of plastid mRNAs. Plays a critical role in biosynthesis of thylakoid membrane proteins encoded by chloroplast genes. In Arabidopsis thaliana (Mouse-ear cress), this protein is Large ribosomal subunit protein uL24c (RPL24).